Reading from the N-terminus, the 203-residue chain is Translation initiation factor IF-3 (203 aa).

Residues 172–182 (EAPKNEKKTKE) are compositionally biased toward basic and acidic residues. Residues 172–203 (EAPKNEKKTKENNPPFNRINLMKGENHAKNED) form a disordered region.

Belongs to the IF-3 family. As to quaternary structure, monomer.

It localises to the cytoplasm. Its function is as follows. IF-3 binds to the 30S ribosomal subunit and shifts the equilibrium between 70S ribosomes and their 50S and 30S subunits in favor of the free subunits, thus enhancing the availability of 30S subunits on which protein synthesis initiation begins. This is Translation initiation factor IF-3 from Helicobacter pylori (strain ATCC 700392 / 26695) (Campylobacter pylori).